A 682-amino-acid chain; its full sequence is MSRKQLALFEPVLLVQALTDAVKKLSPRAQWRNPVMFVVWAGSVLTTLLTLAMVTGQIAGSALFTGIISLWLWFTVLFANFAEALAEGRSKAQANSLKGVKKTAFARRLRAPRHDAQADNVPAAELRKGDIVLVKAGDIIPCDGEVIEGGASVDESAITGESAPVIRESGGDFASVTGGTRILSDWLVIACSVNPGETFLDRMIAMVEGAQRRKTPNEIALTILLIALTIVFLLATATLWPFSAWGGNAVSVTVLVALLVCLIPTTIGGLLSAIGVAGMSRMLGANVIATSGRAVEAAGDVDVLLLDKTGTITLGNRQASDFIPARGVDERTLADAAQLASLADETPEGRSIVILAKQRFNLRERDVQSLHATFVPFTAQSRMSGINIDNRMIRKGSVDAIRRHVESNGGHFPADVEQNVENVARLGATPLVVVEGAHVLGVIALKDIVKGGIKERFAQLRKMGIKTVMITGDNRLTAAAIAAEAGVDDFLAEATPEAKLALIRQYQAEGRLVAMTGDGTNDAPALAQADVAVAMNSGTQAAKEAGNMVDLDSNPTKLIEVVHIGKQMLMTRGSLTTFSIANDVAKYFAIIPAAFAATYPQLNALNVMGLHSPNSAILSAVIFNALIIIFLIPLALKGVSYKPLSASAMLRRNLWIYGLGGLVVPFIGIKVIDVLLTLLGLA.

Transmembrane regions (helical) follow at residues 34–54 (PVMFVVWAGSVLTTLLTLAMV), 58–78 (IAGSALFTGIISLWLWFTVLF), 219–239 (IALTILLIALTIVFLLATATL), and 254–274 (VLVALLVCLIPTTIGGLLSAI). Aspartate 307 functions as the 4-aspartylphosphate intermediate in the catalytic mechanism. Residues aspartate 344, glutamate 348, 377–384 (FTAQSRMS), and lysine 395 each bind ATP. 2 residues coordinate Mg(2+): aspartate 518 and aspartate 522. 3 consecutive transmembrane segments (helical) span residues 588 to 608 (FAIIPAAFAATYPQLNALNVM), 616 to 636 (AILSAVIFNALIIIFLIPLAL), and 662 to 682 (LVVPFIGIKVIDVLLTLLGLA).

It belongs to the cation transport ATPase (P-type) (TC 3.A.3) family. Type IA subfamily. The system is composed of three essential subunits: KdpA, KdpB and KdpC.

The protein resides in the cell inner membrane. It carries out the reaction K(+)(out) + ATP + H2O = K(+)(in) + ADP + phosphate + H(+). Its function is as follows. Part of the high-affinity ATP-driven potassium transport (or Kdp) system, which catalyzes the hydrolysis of ATP coupled with the electrogenic transport of potassium into the cytoplasm. This subunit is responsible for energy coupling to the transport system and for the release of the potassium ions to the cytoplasm. The chain is Potassium-transporting ATPase ATP-binding subunit from Salmonella typhimurium (strain LT2 / SGSC1412 / ATCC 700720).